Consider the following 123-residue polypeptide: Basic myotoxic phospholipase A2 PhTX-II (123 aa).

Disulfide bonds link C26-C116, C28-C45, C44-C95, C50-C123, C51-C88, C58-C81, and C75-C86. Y27, G29, and G31 together coordinate Ca(2+). H48 is a catalytic residue. D49 serves as a coordination point for Ca(2+). Residue D89 is part of the active site.

As to quaternary structure, monomer. Requires Ca(2+) as cofactor. As to expression, expressed by the venom gland.

It is found in the secreted. The catalysed reaction is a 1,2-diacyl-sn-glycero-3-phosphocholine + H2O = a 1-acyl-sn-glycero-3-phosphocholine + a fatty acid + H(+). With respect to regulation, P-bromophenacyl bromide (BPB) completely inhibits the catalytic and edematogenic activities. Enzymatic activity is also diminished by EDTA, heparin and crotapotins F2 and F3 from C.d.collilineatus. Inhibited by divalent cations different from calcium ions (cadmium, magnesium, manganese, zinc), since they act as competitive antagonists of this cofactor. Its function is as follows. Snake venom phospholipase A2 (PLA2) that induces myotoxicity and local edema in mice. In addition, it causes neuromuscular blockade in avian neuromuscular preparations with a significant direct action on skeletal muscle function. Myotoxic action is exerted by both enzymatic and non-enzymatic mechanisms. PLA2 catalyzes the calcium-dependent hydrolysis of the 2-acyl groups in 3-sn-phosphoglycerides. The polypeptide is Basic myotoxic phospholipase A2 PhTX-II (Bothrocophias hyoprora (Amazonian hognose viper)).